Here is a 432-residue protein sequence, read N- to C-terminus: Alcohol acyltransferase 9 (432 aa).

Active-site proton acceptor residues include histidine 156 and aspartate 379.

This sequence belongs to the plant acyltransferase family.

The enzyme catalyses 2-(methylsulfanyl)acetyl-CoA + butan-1-ol = butyl 2-(methylsulfanyl)acetate + CoA. It carries out the reaction ethanol + acetyl-CoA = ethyl acetate + CoA. It catalyses the reaction butan-1-ol + acetyl-CoA = butyl acetate + CoA. The catalysed reaction is butan-1-ol + propanoyl-CoA = butyl propanoate + CoA. Involved in the biosynthesis of volatile esters which confer kiwifruit flavor. Alcohol acyl transferase that can use a wide range of alcohols as substrate to produce esters. Exhibits acetyl-CoA:alcohol O-acyltransferase activity. The chain is Alcohol acyltransferase 9 from Actinidia chinensis var. chinensis (Chinese soft-hair kiwi).